Reading from the N-terminus, the 104-residue chain is Cysteine-rich and transmembrane domain-containing protein 1 (104 aa).

Composition is skewed to pro residues over residues 1-25 (MNPENPPPYPGPGPTAPYPPYPQQP) and 33-47 (GAPPPQGYPYPPPQG). A disordered region spans residues 1-47 (MNPENPPPYPGPGPTAPYPPYPQQPMGPMGPMGAPPPQGYPYPPPQG). The helical transmembrane segment at 81–98 (LGPSTCLTACWTALCCCC) threads the bilayer.

The protein belongs to the CYSTM1 family.

The protein localises to the membrane. This chain is Cysteine-rich and transmembrane domain-containing protein 1 (Cystm1), found in Mus musculus (Mouse).